Here is an 87-residue protein sequence, read N- to C-terminus: Large ribosomal subunit protein eL33 (87 aa).

Belongs to the eukaryotic ribosomal protein eL33 family.

This chain is Large ribosomal subunit protein eL33, found in Pyrococcus horikoshii (strain ATCC 700860 / DSM 12428 / JCM 9974 / NBRC 100139 / OT-3).